Consider the following 286-residue polypeptide: Bark agglutinin I polypeptide B (286 aa).

A signal peptide spans Met-1 to Ser-31. The N-linked (GlcNAc...) asparagine glycan is linked to Asn-148. Mn(2+)-binding residues include Glu-157 and Asp-159. Ca(2+) contacts are provided by Asp-159, Asn-163, and Asp-167. 2 residues coordinate Mn(2+): Asp-167 and His-172.

Belongs to the leguminous lectin family. As to quaternary structure, RPbAI is composed of two polypeptides, A and B, that associate into five different tetrameric isolectins. The A4 combination is the only one devoid of agglutination activity. Isoform B4 displays maximal agglutination activity. Mostly in the axial and ray parenchymal cells of the inner bark. Fewer in the axial and ray parenchymal cells of the xylem. Strong expression in bark. The lectin accumulates in the inner bark in autumn and winter and disappears in may.

Functionally, bark lectins are storage proteins that probably maintain stocks of nitrogen during dormant period. Self-aggregatable molecules that can bind their own carbohydrate side chains. They could also play a role in the plant's defense against phytophagous invertebrates or herbivorous higher animals. This chain is Bark agglutinin I polypeptide B, found in Robinia pseudoacacia (Black locust).